The sequence spans 201 residues: Recombination protein RecR (201 aa).

The C4-type zinc finger occupies cysteine 60–cysteine 75. Residues serine 83–proline 178 enclose the Toprim domain.

It belongs to the RecR family.

Its function is as follows. May play a role in DNA repair. It seems to be involved in an RecBC-independent recombinational process of DNA repair. It may act with RecF and RecO. This is Recombination protein RecR from Rhodopseudomonas palustris (strain BisB18).